A 780-amino-acid polypeptide reads, in one-letter code: Acetyl-CoA decarbonylase/synthase complex subunit alpha (780 aa).

6 residues coordinate [4Fe-4S] cluster: cysteine 73, cysteine 76, cysteine 77, cysteine 79, cysteine 84, and cysteine 93. Histidine 116 is a CO binding site. 3 residues coordinate [Ni-4Fe-4S] cluster: histidine 250, cysteine 278, and cysteine 317. 2 consecutive 4Fe-4S ferredoxin-type domains span residues 399-429 (IDEI…MDAV) and 440-469 (LEEM…VSMV). [4Fe-4S] cluster-binding residues include cysteine 409, cysteine 412, cysteine 415, cysteine 419, cysteine 449, cysteine 452, cysteine 455, and cysteine 459. [Ni-4Fe-4S] cluster contacts are provided by cysteine 517, cysteine 546, and cysteine 581.

Belongs to the Ni-containing carbon monoxide dehydrogenase family. Heterotetramer of two alpha and two epsilon subunits. The ACDS complex is made up of alpha, epsilon, beta, gamma and delta subunits with a probable stoichiometry of (alpha(2)epsilon(2))(4)-beta(8)-(gamma(1)delta(1))(8). The cofactor is [4Fe-4S] cluster. It depends on [Ni-4Fe-4S] cluster as a cofactor.

The enzyme catalyses CO + 2 oxidized [2Fe-2S]-[ferredoxin] + H2O = 2 reduced [2Fe-2S]-[ferredoxin] + CO2 + 2 H(+). Its function is as follows. Part of the ACDS complex that catalyzes the reversible cleavage of acetyl-CoA, allowing autotrophic growth from CO(2). The alpha-epsilon subcomponent functions as a carbon monoxide dehydrogenase. This is Acetyl-CoA decarbonylase/synthase complex subunit alpha from Methanothermobacter thermautotrophicus (strain ATCC 29096 / DSM 1053 / JCM 10044 / NBRC 100330 / Delta H) (Methanobacterium thermoautotrophicum).